The chain runs to 358 residues: tRNA-specific 2-thiouridylase MnmA (358 aa).

ATP-binding positions include 7–14 and methionine 33; that span reads AMSGGVDS. The Nucleophile role is filled by cysteine 102. An intrachain disulfide couples cysteine 102 to cysteine 199. Glycine 126 provides a ligand contact to ATP. Residues 149-151 are interaction with tRNA; the sequence is KDQ. Cysteine 199 serves as the catalytic Cysteine persulfide intermediate. The segment at 305–306 is interaction with tRNA; that stretch reads RY.

Belongs to the MnmA/TRMU family.

It is found in the cytoplasm. The enzyme catalyses S-sulfanyl-L-cysteinyl-[protein] + uridine(34) in tRNA + AH2 + ATP = 2-thiouridine(34) in tRNA + L-cysteinyl-[protein] + A + AMP + diphosphate + H(+). Catalyzes the 2-thiolation of uridine at the wobble position (U34) of tRNA, leading to the formation of s(2)U34. The sequence is that of tRNA-specific 2-thiouridylase MnmA from Halothermothrix orenii (strain H 168 / OCM 544 / DSM 9562).